The chain runs to 274 residues: ATP synthase subunit delta (274 aa).

The protein belongs to the ATPase delta chain family. In terms of assembly, F-type ATPases have 2 components, F(1) - the catalytic core - and F(0) - the membrane proton channel. F(1) has five subunits: alpha(3), beta(3), gamma(1), delta(1), epsilon(1). F(0) has three main subunits: a(1), b(2) and c(10-14). The alpha and beta chains form an alternating ring which encloses part of the gamma chain. F(1) is attached to F(0) by a central stalk formed by the gamma and epsilon chains, while a peripheral stalk is formed by the delta and b chains.

The protein localises to the cell membrane. F(1)F(0) ATP synthase produces ATP from ADP in the presence of a proton or sodium gradient. F-type ATPases consist of two structural domains, F(1) containing the extramembraneous catalytic core and F(0) containing the membrane proton channel, linked together by a central stalk and a peripheral stalk. During catalysis, ATP synthesis in the catalytic domain of F(1) is coupled via a rotary mechanism of the central stalk subunits to proton translocation. In terms of biological role, this protein is part of the stalk that links CF(0) to CF(1). It either transmits conformational changes from CF(0) to CF(1) or is implicated in proton conduction. This Streptomyces coelicolor (strain ATCC BAA-471 / A3(2) / M145) protein is ATP synthase subunit delta.